The sequence spans 107 residues: Replication initiation control protein YabA (107 aa).

Residues H80, C82, C97, and C100 each contribute to the Zn(2+) site.

The protein belongs to the YabA family. As to quaternary structure, homotetramer. Interacts with both DnaA and DnaN, acting as a bridge between these two proteins. Zn(2+) serves as cofactor.

It is found in the cytoplasm. The protein resides in the nucleoid. In terms of biological role, involved in control of chromosome replication initiation. Inhibits the cooperative binding of DnaA to the oriC region, thus negatively regulating initiation of chromosome replication. Inhibits the ability of DnaA-ATP to form a helix on DNA; does not disassemble preformed DnaA-DNA helices. Decreases the residence time of DnaA on the chromosome at its binding sites (oriC, replication forks and promoter-binding sites). Tethers DnaA to the replication machinery via the DNA polymerase beta sliding clamp subunit (dnaN). Associates with oriC and other DnaA targets on the chromosome in a DnaA-dependent manner. This Streptococcus gordonii (strain Challis / ATCC 35105 / BCRC 15272 / CH1 / DL1 / V288) protein is Replication initiation control protein YabA.